A 396-amino-acid chain; its full sequence is KiSS-1 receptor (396 aa).

Over 1-43 (MATEATLAPNVTWWAPSNASGCPGCGVNASDDPGSAPRPLDAW) the chain is Extracellular. N-linked (GlcNAc...) asparagine glycans are attached at residues Asn10, Asn18, and Asn28. Residues 44 to 66 (LVPLFFATLMLLGLVGNSLVIYV) form a helical membrane-spanning segment. The Cytoplasmic portion of the chain corresponds to 67–78 (ICRHKHMQTVTN). A helical transmembrane segment spans residues 79 to 101 (FYIANLAATDVTFLLCCVPFTAL). Topologically, residues 102–116 (LYPLPAWVLGDFMCK) are extracellular. A disulfide bond links Cys115 and Cys191. Residues 117 to 138 (FVNYIQQVSVQATCATLTAMSV) form a helical membrane-spanning segment. Over 139–157 (DRWYVTVFPLRALHRRTPR) the chain is Cytoplasmic. Residues 158–180 (LALAVSLSIWVGSAAVSAPVLAL) traverse the membrane as a helical segment. Topologically, residues 181–203 (HRLSPGPRTYCSEAFPSRALERA) are extracellular. A helical membrane pass occupies residues 204-224 (FALYNLLALYLLPLLATCACY). Residues 225–260 (GAMLRHLGRAAVRPAPTDGALQGQLLAQRAGAVRTK) are Cytoplasmic-facing. A helical transmembrane segment spans residues 261 to 283 (VSRLVAAVVLLFAACWGPIQLFL). Over 284–305 (VLQALGPSGAWHPRSYAAYAVK) the chain is Extracellular. The chain crosses the membrane as a helical span at residues 306 to 330 (IWAHCMSYSNSALNPLLYAFLGSHF). At 331-396 (RQAFCRVCPC…CAQSERTASL (66 aa)) the chain is on the cytoplasmic side. Residues 349–396 (HTSAHSDRAATHTVPHSRAAHPVRIRSPEPGNPVVRSPCAQSERTASL) are disordered. The span at 387–396 (CAQSERTASL) shows a compositional bias: polar residues.

This sequence belongs to the G-protein coupled receptor 1 family. As to expression, highest level in the heart and 15- and 17-day embryos. Low level in other tissues. Colocalized with gonadotropin-releasing hormone (GnRH) neurons in the hypothalamus.

It is found in the cell membrane. Functionally, receptor for metastin (kisspeptin-52 or kp-52), a C-terminally amidated peptide of KiSS1. KiSS1 is a metastasis suppressor protein. Activation of the receptor inhibits cell proliferation and cell migration, key characteristics of tumor metastasis. The receptor is essential for normal gonadotropin-released hormone physiology and for puberty. The hypothalamic KiSS1/KISS1R system is a pivotal factor in central regulation of the gonadotropic axis at puberty and in adulthood. Analysis of the transduction pathways activated by the receptor identifies coupling to phospholipase C and intracellular calcium release through pertussis toxin-insensitive G(q) proteins. This Mus musculus (Mouse) protein is KiSS-1 receptor (Kiss1r).